Consider the following 102-residue polypeptide: DNA/RNA-binding protein Alba 2 (102 aa).

The DNA site is built by Arg-10, Arg-13, Arg-40, Arg-42, Asn-43, Arg-46, and Arg-86.

Belongs to the histone-like Alba family. As to quaternary structure, forms homodimers and homotetramers; oligomerization is enhanced and stabilized by DNA. Interacts with Alba 1.

Its subcellular location is the cytoplasm. The protein localises to the chromosome. Functionally, binds double-stranded DNA tightly but without sequence specificity. Involved in DNA compaction. In Aeropyrum pernix (strain ATCC 700893 / DSM 11879 / JCM 9820 / NBRC 100138 / K1), this protein is DNA/RNA-binding protein Alba 2.